A 397-amino-acid polypeptide reads, in one-letter code: Enoyl-[acyl-carrier-protein] reductase [NADH] (397 aa).

NAD(+) contacts are provided by residues 47 to 52 (GASTGY), 73 to 74 (LE), 110 to 111 (DA), and 138 to 139 (LA). Tyr224 contributes to the substrate binding site. Catalysis depends on Tyr234, which acts as the Proton donor. NAD(+) contacts are provided by residues Lys243 and 272–274 (LVT).

It belongs to the TER reductase family. Monomer.

It carries out the reaction a 2,3-saturated acyl-[ACP] + NAD(+) = a (2E)-enoyl-[ACP] + NADH + H(+). It participates in lipid metabolism; fatty acid biosynthesis. Its function is as follows. Involved in the final reduction of the elongation cycle of fatty acid synthesis (FAS II). Catalyzes the reduction of a carbon-carbon double bond in an enoyl moiety that is covalently linked to an acyl carrier protein (ACP). The chain is Enoyl-[acyl-carrier-protein] reductase [NADH] from Methylobacillus flagellatus (strain ATCC 51484 / DSM 6875 / VKM B-1610 / KT).